The following is a 334-amino-acid chain: Holliday junction branch migration complex subunit RuvB (334 aa).

Residues 1–182 form a large ATPase domain (RuvB-L) region; it reads MDERLVSSEA…FGVLSRLEYY (182 aa). ATP is bound by residues leucine 21, arginine 22, glycine 63, lysine 66, threonine 67, threonine 68, 129–131, arginine 172, tyrosine 182, and arginine 219; that span reads EDF. Threonine 67 is a binding site for Mg(2+). Positions 183-253 are small ATPAse domain (RuvB-S); that stretch reads TQEELTDIVS…IAHDALERLQ (71 aa). The interval 256–334 is head domain (RuvB-H); sequence ALGLDHIDHK…HFRLEAPARD (79 aa). The DNA site is built by arginine 311 and arginine 316.

This sequence belongs to the RuvB family. Homohexamer. Forms an RuvA(8)-RuvB(12)-Holliday junction (HJ) complex. HJ DNA is sandwiched between 2 RuvA tetramers; dsDNA enters through RuvA and exits via RuvB. An RuvB hexamer assembles on each DNA strand where it exits the tetramer. Each RuvB hexamer is contacted by two RuvA subunits (via domain III) on 2 adjacent RuvB subunits; this complex drives branch migration. In the full resolvosome a probable DNA-RuvA(4)-RuvB(12)-RuvC(2) complex forms which resolves the HJ.

The protein resides in the cytoplasm. It catalyses the reaction ATP + H2O = ADP + phosphate + H(+). Its function is as follows. The RuvA-RuvB-RuvC complex processes Holliday junction (HJ) DNA during genetic recombination and DNA repair, while the RuvA-RuvB complex plays an important role in the rescue of blocked DNA replication forks via replication fork reversal (RFR). RuvA specifically binds to HJ cruciform DNA, conferring on it an open structure. The RuvB hexamer acts as an ATP-dependent pump, pulling dsDNA into and through the RuvAB complex. RuvB forms 2 homohexamers on either side of HJ DNA bound by 1 or 2 RuvA tetramers; 4 subunits per hexamer contact DNA at a time. Coordinated motions by a converter formed by DNA-disengaged RuvB subunits stimulates ATP hydrolysis and nucleotide exchange. Immobilization of the converter enables RuvB to convert the ATP-contained energy into a lever motion, pulling 2 nucleotides of DNA out of the RuvA tetramer per ATP hydrolyzed, thus driving DNA branch migration. The RuvB motors rotate together with the DNA substrate, which together with the progressing nucleotide cycle form the mechanistic basis for DNA recombination by continuous HJ branch migration. Branch migration allows RuvC to scan DNA until it finds its consensus sequence, where it cleaves and resolves cruciform DNA. The polypeptide is Holliday junction branch migration complex subunit RuvB (Bacillus velezensis (strain DSM 23117 / BGSC 10A6 / LMG 26770 / FZB42) (Bacillus amyloliquefaciens subsp. plantarum)).